Reading from the N-terminus, the 220-residue chain is Redox-sensing transcriptional repressor Rex (220 aa).

Residues 25–64 (WYLSNVKLLKQRGERFVSSTQISKEINIDASQIAKDLSYV) constitute a DNA-binding region (H-T-H motif). 99-104 (GVGSLG) lines the NAD(+) pocket.

The protein belongs to the transcriptional regulatory Rex family. Homodimer.

It is found in the cytoplasm. Modulates transcription in response to changes in cellular NADH/NAD(+) redox state. The protein is Redox-sensing transcriptional repressor Rex of Bacteroides thetaiotaomicron (strain ATCC 29148 / DSM 2079 / JCM 5827 / CCUG 10774 / NCTC 10582 / VPI-5482 / E50).